A 156-amino-acid chain; its full sequence is Snaclec A6 (156 aa).

A signal peptide spans 1–23 (MGRSISVSFGLLVVFLSLSGTGA). Intrachain disulfides connect Cys-27-Cys-38, Cys-55-Cys-154, and Cys-129-Cys-146. Positions 34–155 (HEGHCYKVFN…CGKPYRFTCE (122 aa)) constitute a C-type lectin domain.

This sequence belongs to the snaclec family. Heterodimer; disulfide-linked. In terms of tissue distribution, expressed by the venom gland.

It localises to the secreted. Functionally, interferes with one step of hemostasis (modulation of platelet aggregation, or coagulation cascade, for example). This Macrovipera lebetinus (Levantine viper) protein is Snaclec A6.